The primary structure comprises 726 residues: Delta-1-pyrroline-5-carboxylate synthase B (726 aa).

The segment at 1–296 (MTEIDRSRAF…WAPVVDTTSR (296 aa)) is glutamate 5-kinase. Residues Ser-60, Asp-157, and Asn-176 each contribute to the substrate site. Residues 196–197 (SD) and 236–242 (RGGMTAK) contribute to the ATP site. A gamma-glutamyl phosphate reductase region spans residues 297 to 717 (DMAVAARESS…YTHKDLPVLQ (421 aa)).

This sequence in the N-terminal section; belongs to the glutamate 5-kinase family. It in the C-terminal section; belongs to the gamma-glutamyl phosphate reductase family.

It catalyses the reaction L-glutamate + ATP = L-glutamyl 5-phosphate + ADP. It carries out the reaction L-glutamate 5-semialdehyde + phosphate + NADP(+) = L-glutamyl 5-phosphate + NADPH + H(+). It participates in amino-acid biosynthesis; L-proline biosynthesis; L-glutamate 5-semialdehyde from L-glutamate: step 1/2. Its pathway is amino-acid biosynthesis; L-proline biosynthesis; L-glutamate 5-semialdehyde from L-glutamate: step 2/2. Its function is as follows. P5CS plays a key role in proline biosynthesis, leading to osmoregulation in plants. This Arabidopsis thaliana (Mouse-ear cress) protein is Delta-1-pyrroline-5-carboxylate synthase B (P5CSB).